The primary structure comprises 903 residues: Chitin synthase 1 (903 aa).

Residues 1 to 154 (MDPRYGAQPQ…YQDQPQQGGG (154 aa)) form a disordered region. Positions 67-79 (DHLNLNAAQSVDN) are enriched in polar residues. N-linked (GlcNAc...) asparagine glycosylation is present at N79. Residues 100–117 (YYNQPYEPRPQQQPYDQG) are compositionally biased toward low complexity. The segment covering 135-150 (HQPSDAPSEPYQDQPQ) has biased composition (polar residues). 9 consecutive transmembrane segments (helical) span residues 444–464 (SAFGFISVLPGAFSAYRYVAL), 543–563 (RWLNGSFFAAIYAIVHFLDFL), 573–593 (FAFFIEFIFNTINMIFAWFAI), 619–639 (ILGVVFTWLYGVFLITCFVLS), 654–674 (MCWFWAIIMIYLLFAAIFIAV), 700–720 (MLIISVMSTFGIWLIASLIML), 729–749 (LVQYMLLTPTFTNVLNVYAFC), 828–848 (GVVLIWMVSNFGLAALVLSSA), and 875–895 (IVLWSVAGLSAFKFIGAMWFL).

This sequence belongs to the chitin synthase family. Class I subfamily.

The protein localises to the cell membrane. It carries out the reaction [(1-&gt;4)-N-acetyl-beta-D-glucosaminyl](n) + UDP-N-acetyl-alpha-D-glucosamine = [(1-&gt;4)-N-acetyl-beta-D-glucosaminyl](n+1) + UDP + H(+). In terms of biological role, polymerizes chitin, a structural polymer of the cell wall and septum, by transferring the sugar moiety of UDP-GlcNAc to the non-reducing end of the growing chitin polymer. Plays an important role in nuclear sorting or distribution. The polypeptide is Chitin synthase 1 (Fusarium oxysporum f. sp. lycopersici (strain 4287 / CBS 123668 / FGSC 9935 / NRRL 34936) (Fusarium vascular wilt of tomato)).